Consider the following 245-residue polypeptide: Uridylate kinase (245 aa).

Residue Lys12–Gly15 participates in ATP binding. The interval Gly20–Gly25 is involved in allosteric activation by GTP. Gly54 contributes to the UMP binding site. ATP is bound by residues Gly55 and Arg59. UMP is bound by residues Asp74 and Ile135–Thr142. Positions 163, 169, and 172 each coordinate ATP.

It belongs to the UMP kinase family. In terms of assembly, homohexamer.

The protein resides in the cytoplasm. It catalyses the reaction UMP + ATP = UDP + ADP. It functions in the pathway pyrimidine metabolism; CTP biosynthesis via de novo pathway; UDP from UMP (UMPK route): step 1/1. Its activity is regulated as follows. Allosterically activated by GTP. Inhibited by UTP. Functionally, catalyzes the reversible phosphorylation of UMP to UDP. The polypeptide is Uridylate kinase (Streptococcus thermophilus (strain ATCC BAA-491 / LMD-9)).